The sequence spans 177 residues: Protein GrpE (177 aa).

The protein belongs to the GrpE family. Homodimer. K(+) serves as cofactor.

The protein localises to the cytoplasm. Participates actively in the response to hyperosmotic and heat shock by preventing the aggregation of stress-denatured proteins, in association with DnaK and GrpE. It is the nucleotide exchange factor for DnaK and may function as a thermosensor. Unfolded proteins bind initially to DnaJ; upon interaction with the DnaJ-bound protein, DnaK hydrolyzes its bound ATP, resulting in the formation of a stable complex. GrpE releases ADP from DnaK; ATP binding to DnaK triggers the release of the substrate protein, thus completing the reaction cycle. Several rounds of ATP-dependent interactions between DnaJ, DnaK and GrpE are required for fully efficient folding. In Thermus thermophilus (strain ATCC 27634 / DSM 579 / HB8), this protein is Protein GrpE.